The following is a 139-amino-acid chain: D-ribose pyranase (139 aa).

His-20 (proton donor) is an active-site residue. Substrate is bound by residues Asp-28, His-106, and 128-130; that span reads YAN.

It belongs to the RbsD / FucU family. RbsD subfamily. Homodecamer.

It is found in the cytoplasm. The catalysed reaction is beta-D-ribopyranose = beta-D-ribofuranose. The protein operates within carbohydrate metabolism; D-ribose degradation; D-ribose 5-phosphate from beta-D-ribopyranose: step 1/2. In terms of biological role, catalyzes the interconversion of beta-pyran and beta-furan forms of D-ribose. This is D-ribose pyranase from Photobacterium profundum (strain SS9).